Consider the following 389-residue polypeptide: Phosphopentomutase (389 aa).

Mn(2+) contacts are provided by Asp-9, Asp-282, His-287, Asp-323, His-324, and His-335.

This sequence belongs to the phosphopentomutase family. Requires Mn(2+) as cofactor.

The protein localises to the cytoplasm. It carries out the reaction 2-deoxy-alpha-D-ribose 1-phosphate = 2-deoxy-D-ribose 5-phosphate. The enzyme catalyses alpha-D-ribose 1-phosphate = D-ribose 5-phosphate. The protein operates within carbohydrate degradation; 2-deoxy-D-ribose 1-phosphate degradation; D-glyceraldehyde 3-phosphate and acetaldehyde from 2-deoxy-alpha-D-ribose 1-phosphate: step 1/2. Its function is as follows. Isomerase that catalyzes the conversion of deoxy-ribose 1-phosphate (dRib-1-P) and ribose 1-phosphate (Rib-1-P) to deoxy-ribose 5-phosphate (dRib-5-P) and ribose 5-phosphate (Rib-5-P), respectively. The chain is Phosphopentomutase from Pseudothermotoga lettingae (strain ATCC BAA-301 / DSM 14385 / NBRC 107922 / TMO) (Thermotoga lettingae).